The chain runs to 731 residues: Wall-associated receptor kinase-like 5 (731 aa).

The first 26 residues, 1-26 (MKTKTYRFVCLVASVLTLQLMNGSSA), serve as a signal peptide directing secretion. Residues 27–360 (ATPPPPPNSK…PAKPLVLQGV (334 aa)) are Extracellular-facing. Residues Asn37, Asn43, Asn73, Asn96, Asn124, Asn137, Asn236, and Asn272 are each glycosylated (N-linked (GlcNAc...) asparagine). The tract at residues 285 to 342 (CLCEYGYFSEMSYRNCYCSLGFTGNPYLRGGCIDNDDCKGPNICEEGTCVNVPGGYRC) is atypical EGF-like. 3 disulfides stabilise this stretch: Cys287–Cys300, Cys322–Cys333, and Cys328–Cys342. The helical transmembrane segment at 361–381 (LLGLMGLLFLVVGTLGLIIFI) threads the bilayer. The Cytoplasmic portion of the chain corresponds to 382–731 (KKRRRIISSR…EDQVMEISRE (350 aa)). The 274-residue stretch at 432–705 (FSVKRVLGKG…REASLELERI (274 aa)) folds into the Protein kinase domain. Residues 438 to 446 (LGKGSQGTV) and Lys460 each bind ATP. Position 505 is a phosphotyrosine (Tyr505). Asp557 acts as the Proton acceptor in catalysis. Phosphothreonine occurs at positions 591 and 596. At Tyr604 the chain carries Phosphotyrosine. A disordered region spans residues 709 to 731 (PEDLEAHIENDDEEDQVMEISRE).

This sequence belongs to the protein kinase superfamily. Ser/Thr protein kinase family. As to expression, preferentially expressed in roots and flowers.

Its subcellular location is the membrane. The enzyme catalyses L-seryl-[protein] + ATP = O-phospho-L-seryl-[protein] + ADP + H(+). It catalyses the reaction L-threonyl-[protein] + ATP = O-phospho-L-threonyl-[protein] + ADP + H(+). Serine/threonine-protein kinase that may function as a signaling receptor of extracellular matrix component. May be involved in plant's response to pathogen infection. The sequence is that of Wall-associated receptor kinase-like 5 (WAKL5) from Arabidopsis thaliana (Mouse-ear cress).